The following is a 166-amino-acid chain: Large ribosomal subunit protein uL10 (166 aa).

The protein belongs to the universal ribosomal protein uL10 family. Part of the ribosomal stalk of the 50S ribosomal subunit. The N-terminus interacts with L11 and the large rRNA to form the base of the stalk. The C-terminus forms an elongated spine to which L12 dimers bind in a sequential fashion forming a multimeric L10(L12)X complex.

Forms part of the ribosomal stalk, playing a central role in the interaction of the ribosome with GTP-bound translation factors. In Aeromonas salmonicida (strain A449), this protein is Large ribosomal subunit protein uL10.